The sequence spans 250 residues: QNCQCDTTIYCCSQHGYCGNSYDYCGPGCQAGPCWDPCEGDGTLTVSDIVTQEFWDGIASQAAANCPGKSFYTRSNFLEAVSAYPGFGTKCTDEDRKREIAAYFAHVTHETGHLCYIEERDGHANNYCQESQQYPCNPNKEYFGRGPMQLSWNYNYIDAGKELHFDGLNDPDIVGRDPIISFKTSLWFWIRKGVQYVILDPNQGFGATIRIINGGQECDGHNTAQMMARVGYYQEYCAQLGVSPGNNLPC.

A Pyrrolidone carboxylic acid modification is found at Gln1. In terms of domain architecture, Chitin-binding type-1 spans 1 to 36 (QNCQCDTTIYCCSQHGYCGNSYDYCGPGCQAGPCWD). Disulfide bonds link Cys3/Cys12, Cys5/Cys18, Cys11/Cys25, Cys29/Cys34, Cys66/Cys115, Cys128/Cys136, and Cys218/Cys250. The active-site Proton donor is Glu110.

Belongs to the glycosyl hydrolase 19 family. Chitinase class I subfamily.

The catalysed reaction is Random endo-hydrolysis of N-acetyl-beta-D-glucosaminide (1-&gt;4)-beta-linkages in chitin and chitodextrins.. Defense against chitin-containing fungal pathogens. The chain is Acidic endochitinase from Dioscorea japonica (Japanese yam).